Consider the following 271-residue polypeptide: Phosphatidylglycerol--prolipoprotein diacylglyceryl transferase (271 aa).

7 helical membrane-spanning segments follow: residues Ile-21–Ala-41, Leu-60–Tyr-80, Val-95–Trp-115, Phe-124–Leu-144, Ser-176–Ile-196, Gly-203–Val-223, and Leu-230–Gly-250. Arg-143 contacts a 1,2-diacyl-sn-glycero-3-phospho-(1'-sn-glycerol).

It belongs to the Lgt family.

The protein resides in the cell inner membrane. The enzyme catalyses L-cysteinyl-[prolipoprotein] + a 1,2-diacyl-sn-glycero-3-phospho-(1'-sn-glycerol) = an S-1,2-diacyl-sn-glyceryl-L-cysteinyl-[prolipoprotein] + sn-glycerol 1-phosphate + H(+). Its pathway is protein modification; lipoprotein biosynthesis (diacylglyceryl transfer). Its function is as follows. Catalyzes the transfer of the diacylglyceryl group from phosphatidylglycerol to the sulfhydryl group of the N-terminal cysteine of a prolipoprotein, the first step in the formation of mature lipoproteins. This chain is Phosphatidylglycerol--prolipoprotein diacylglyceryl transferase, found in Vibrio vulnificus (strain CMCP6).